Consider the following 249-residue polypeptide: Early E1A protein (249 aa).

An interaction with RB1 in competition with E2F1 region spans residues 38–46 (MSLHDLFDV). The interval 74–131 (SAAESGSGDSGVGEELLPVDLDLKCYEDGLPPSDPETDEATEAEEEAAMPTYVNENEN) is interaction with UBE2I. The LXCXE motif, interaction with host RB1 and TMEM173/STING signature appears at 96 to 100 (LKCYE). A zinc finger spans residues 145-165 (CRACDFHRGTSGNPEAMCALC). The disordered stretch occupies residues 180–203 (DAEGESESGSPEDTDFPHPLTATP). The span at 181-193 (AEGESESGSPEDT) shows a compositional bias: acidic residues. A PXDLS motif, CTBP-binding motif is present at residues 238–242 (PLNLS). The short motif at 244-248 (KRPKC) is the Nuclear localization signal element.

Belongs to the adenoviridae E1A protein family. As to quaternary structure, interacts with host UBE2I; this interaction interferes with polySUMOylation. Interacts with host RB1; this interaction induces the aberrant dissociation of RB1-E2F1 complex thereby disrupting the activity of RB1 and activating E2F1-regulated genes. Interacts with host ATF7; the interaction enhances ATF7-mediated viral transactivation activity which requires the zinc binding domains of both proteins. Isoform early E1A 32 kDa protein and isoform early E1A 26 kDa protein interact (via N-terminus) with CUL1 and E3 ubiquitin ligase RBX1; these interactions inhibit RBX1-CUL1-dependent elongation reaction of ubiquitin chains and attenuate ubiquitination of SCF(FBXW7) target proteins. Interacts (via PXLXP motif) with host ZMYND11/BS69 (via MYND-type zinc finger); this interaction inhibits E1A mediated transactivation. Interacts with host EP300; this interaction stimulates the acetylation of RB1 by recruiting EP300 and RB1 into a multimeric-protein complex. Interacts with host CTBP1 and CTBP2; this interaction seems to potentiate viral replication. Interacts with host DCAF7. Interacts with host DYRK1A. Interacts with host KPNA4; this interaction allows E1A import into the host nucleus. Interacts with host EP400; this interaction stabilizes MYC. Interacts with host TBP protein; this interaction probably disrupts the TBP-TATA complex. Interacts (via LXCXE motif) with host TMEM173/STING; this interaction impairs the ability of TMEM173/STING to sense cytosolic DNA and promote the production of type I interferon (IFN-alpha and IFN-beta). Interacts (via C-terminus) with host ZBED1/hDREF (via C-terminus); the interaction is direct.

It localises to the host nucleus. Functionally, plays a role in viral genome replication by driving entry of quiescent cells into the cell cycle. Stimulation of progression from G1 to S phase allows the virus to efficiently use the cellular DNA replicating machinery to achieve viral genome replication. E1A protein has both transforming and trans-activating activities. Induces the disassembly of the E2F1 transcription factor from RB1 by direct competition for the same binding site on RB1, with subsequent transcriptional activation of E2F1-regulated S-phase genes and of the E2 region of the adenoviral genome. Release of E2F1 leads to the ARF-mediated inhibition of MDM2 and causes TP53/p53 to accumulate because it is not targeted for degradation by MDM2-mediated ubiquitination anymore. This increase in TP53, in turn, would arrest the cell proliferation and direct its death but this effect is counteracted by the viral protein E1B-55K. Inactivation of the ability of RB1 to arrest the cell cycle is critical for cellular transformation, uncontrolled cellular growth and proliferation induced by viral infection. Interaction with RBX1 and CUL1 inhibits ubiquitination of the proteins targeted by SCF(FBXW7) ubiquitin ligase complex, and may be linked to unregulated host cell proliferation. The tumorigenesis-restraining activity of E1A may be related to the disruption of the host CtBP-CtIP complex through the CtBP binding motif. Interaction with host TMEM173/STING impairs the ability of TMEM173/STING to sense cytosolic DNA and promote the production of type I interferon (IFN-alpha and IFN-beta). Promotes the sumoylation of host ZBED1/hDREF with SUMO1. The sequence is that of Early E1A protein from Homo sapiens (Human).